The sequence spans 126 residues: Bactofilin BacO (126 aa).

The protein belongs to the bactofilin family. In terms of assembly, interacts with BacN and probably also BacP, the 3 proteins colocalize as an extended structure. Interacts with PadC.

Its subcellular location is the cytoplasm. It is found in the cytoskeleton. In terms of biological role, a non-essential component of the chromosome segregation machinery. Positions the ParA-ParB-parS chromosome segregation machinery within the cell; BacP seems to be the most important bactofilin in this process. Forms a heteropolymeric, subpolar scaffold in the cell; BacP probably forms the core, BacO contributes to position and integrity while BacN does not seem to contribute to assembly. In Myxococcus xanthus (strain DK1622), this protein is Bactofilin BacO.